The sequence spans 341 residues: Phenylalanine--tRNA ligase alpha subunit (341 aa).

Glutamate 254 lines the Mg(2+) pocket.

It belongs to the class-II aminoacyl-tRNA synthetase family. Phe-tRNA synthetase alpha subunit type 1 subfamily. In terms of assembly, tetramer of two alpha and two beta subunits. Requires Mg(2+) as cofactor.

It localises to the cytoplasm. The enzyme catalyses tRNA(Phe) + L-phenylalanine + ATP = L-phenylalanyl-tRNA(Phe) + AMP + diphosphate + H(+). The sequence is that of Phenylalanine--tRNA ligase alpha subunit from Chlorobaculum parvum (strain DSM 263 / NCIMB 8327) (Chlorobium vibrioforme subsp. thiosulfatophilum).